The primary structure comprises 233 residues: tRNA pseudouridine synthase B (233 aa).

The Nucleophile role is filled by D48.

This sequence belongs to the pseudouridine synthase TruB family. Type 1 subfamily.

It carries out the reaction uridine(55) in tRNA = pseudouridine(55) in tRNA. Its function is as follows. Responsible for synthesis of pseudouridine from uracil-55 in the psi GC loop of transfer RNAs. This chain is tRNA pseudouridine synthase B, found in Bacteroides fragilis (strain ATCC 25285 / DSM 2151 / CCUG 4856 / JCM 11019 / LMG 10263 / NCTC 9343 / Onslow / VPI 2553 / EN-2).